Reading from the N-terminus, the 729-residue chain is Phosphoribosylformylglycinamidine synthase subunit PurL (729 aa).

Residue histidine 54 is part of the active site. 2 residues coordinate ATP: tyrosine 57 and lysine 96. Glutamate 98 is a Mg(2+) binding site. Substrate contacts are provided by residues 99 to 102 (SHNH) and arginine 121. Catalysis depends on histidine 100, which acts as the Proton acceptor. Aspartate 122 serves as a coordination point for Mg(2+). Residue glutamine 245 participates in substrate binding. Aspartate 273 contacts Mg(2+). 317 to 319 (ETQ) provides a ligand contact to substrate. ATP-binding residues include aspartate 495 and glycine 532. Asparagine 533 serves as a coordination point for Mg(2+). Residue serine 535 coordinates substrate.

The protein belongs to the FGAMS family. Monomer. Part of the FGAM synthase complex composed of 1 PurL, 1 PurQ and 2 PurS subunits.

It is found in the cytoplasm. It carries out the reaction N(2)-formyl-N(1)-(5-phospho-beta-D-ribosyl)glycinamide + L-glutamine + ATP + H2O = 2-formamido-N(1)-(5-O-phospho-beta-D-ribosyl)acetamidine + L-glutamate + ADP + phosphate + H(+). The protein operates within purine metabolism; IMP biosynthesis via de novo pathway; 5-amino-1-(5-phospho-D-ribosyl)imidazole from N(2)-formyl-N(1)-(5-phospho-D-ribosyl)glycinamide: step 1/2. Functionally, part of the phosphoribosylformylglycinamidine synthase complex involved in the purines biosynthetic pathway. Catalyzes the ATP-dependent conversion of formylglycinamide ribonucleotide (FGAR) and glutamine to yield formylglycinamidine ribonucleotide (FGAM) and glutamate. The FGAM synthase complex is composed of three subunits. PurQ produces an ammonia molecule by converting glutamine to glutamate. PurL transfers the ammonia molecule to FGAR to form FGAM in an ATP-dependent manner. PurS interacts with PurQ and PurL and is thought to assist in the transfer of the ammonia molecule from PurQ to PurL. The protein is Phosphoribosylformylglycinamidine synthase subunit PurL of Staphylococcus epidermidis (strain ATCC 12228 / FDA PCI 1200).